The chain runs to 267 residues: AMP/ADP-polyphosphate phosphotransferase (267 aa).

This sequence belongs to the polyphosphate kinase 2 (PPK2) family. Class III subfamily. Requires Mn(2+) as cofactor.

It carries out the reaction [phosphate](n) + ADP = [phosphate](n+1) + AMP. It catalyses the reaction [phosphate](n) + ATP = [phosphate](n+1) + ADP. Functionally, uses inorganic polyphosphate (polyP) as a donor to convert both AMP to ADP and ADP to ATP. Can also use GMP, CMP, UMP, GDP, CDP and UDP. The chain is AMP/ADP-polyphosphate phosphotransferase from Meiothermus ruber (strain ATCC 35948 / DSM 1279 / VKM B-1258 / 21) (Thermus ruber).